The chain runs to 361 residues: 5-formaminoimidazole-4-carboxamide-1-(beta)-D-ribofuranosyl 5'-monophosphate synthetase (361 aa).

5-amino-1-(5-phospho-beta-D-ribosyl)imidazole-4-carboxamide is bound by residues H27 and S94. Positions 116-348 constitute an ATP-grasp domain; it reads RAILRWEAER…MGQRIAREIK (233 aa). Residues 146–208 and E230 contribute to the ATP site; that span reads PDDI…ANYC. N258 is a 5-amino-1-(5-phospho-beta-D-ribosyl)imidazole-4-carboxamide binding site. Mg(2+) contacts are provided by Q297 and E310.

Belongs to the phosphohexose mutase family. Requires Mg(2+) as cofactor. It depends on Mn(2+) as a cofactor.

The enzyme catalyses 5-amino-1-(5-phospho-beta-D-ribosyl)imidazole-4-carboxamide + formate + ATP = 5-formamido-1-(5-phospho-D-ribosyl)imidazole-4-carboxamide + ADP + phosphate. The protein operates within purine metabolism; IMP biosynthesis via de novo pathway; 5-formamido-1-(5-phospho-D-ribosyl)imidazole-4-carboxamide from 5-amino-1-(5-phospho-D-ribosyl)imidazole-4-carboxamide (formate route): step 1/1. Catalyzes the ATP- and formate-dependent formylation of 5-aminoimidazole-4-carboxamide-1-beta-d-ribofuranosyl 5'-monophosphate (AICAR) to 5-formaminoimidazole-4-carboxamide-1-beta-d-ribofuranosyl 5'-monophosphate (FAICAR) in the absence of folates. The chain is 5-formaminoimidazole-4-carboxamide-1-(beta)-D-ribofuranosyl 5'-monophosphate synthetase from Methanococcus maripaludis (strain C7 / ATCC BAA-1331).